The chain runs to 270 residues: 3-phenylpropionate-dihydrodiol/cinnamic acid-dihydrodiol dehydrogenase (270 aa).

10-34 (FITGGGSGLGLALVERFIEEGAQVA) contributes to the NAD(+) binding site. Ser-143 contributes to the substrate binding site. Tyr-156 functions as the Proton acceptor in the catalytic mechanism.

This sequence belongs to the short-chain dehydrogenases/reductases (SDR) family.

It carries out the reaction 3-(cis-5,6-dihydroxycyclohexa-1,3-dien-1-yl)propanoate + NAD(+) = 3-(2,3-dihydroxyphenyl)propanoate + NADH + H(+). The catalysed reaction is (2E)-3-(cis-5,6-dihydroxycyclohexa-1,3-dien-1-yl)prop-2-enoate + NAD(+) = (2E)-3-(2,3-dihydroxyphenyl)prop-2-enoate + NADH + H(+). The protein operates within aromatic compound metabolism; 3-phenylpropanoate degradation. In terms of biological role, converts 3-phenylpropionate-dihydrodiol (PP-dihydrodiol) and cinnamic acid-dihydrodiol (CI-dihydrodiol) into 3-(2,3-dihydroxylphenyl)propanoic acid (DHPP) and 2,3-dihydroxicinnamic acid (DHCI), respectively. This Escherichia coli O157:H7 protein is 3-phenylpropionate-dihydrodiol/cinnamic acid-dihydrodiol dehydrogenase.